The sequence spans 196 residues: Ribosome maturation factor RimP (196 aa).

The segment at 164–196 (LAPQKPNKPGPKKPGHEKKKPSNESAAGKPRAE) is disordered. Residues 173 to 182 (GPKKPGHEKK) are compositionally biased toward basic residues.

Belongs to the RimP family.

The protein resides in the cytoplasm. Required for maturation of 30S ribosomal subunits. The protein is Ribosome maturation factor RimP of Xanthomonas axonopodis pv. citri (strain 306).